Here is a 1022-residue protein sequence, read N- to C-terminus: Antigenic heat-stable 120 kDa protein (1022 aa).

Disordered stretches follow at residues methionine 1–threonine 41 and glycine 355–glutamine 403. Residues glutamate 19 to glutamate 34 show a composition bias toward basic and acidic residues. 2 stretches are compositionally biased toward polar residues: residues glycine 355–glutamine 380 and proline 387–glutamine 403.

The protein localises to the cytoplasm. The polypeptide is Antigenic heat-stable 120 kDa protein (sca4) (Rickettsia conorii (strain ATCC VR-613 / Malish 7)).